A 501-amino-acid polypeptide reads, in one-letter code: Ribose import ATP-binding protein RbsA (501 aa).

2 ABC transporter domains span residues 5-241 (LQLK…VGRK) and 252-495 (APGD…VGKL). Position 37-44 (37-44 (GENGAGKS)) interacts with ATP.

The protein belongs to the ABC transporter superfamily. Ribose importer (TC 3.A.1.2.1) family. In terms of assembly, the complex is composed of an ATP-binding protein (RbsA), two transmembrane proteins (RbsC) and a solute-binding protein (RbsB).

The protein resides in the cell inner membrane. It carries out the reaction D-ribose(out) + ATP + H2O = D-ribose(in) + ADP + phosphate + H(+). Functionally, part of the ABC transporter complex RbsABC involved in ribose import. Responsible for energy coupling to the transport system. In Shigella sonnei (strain Ss046), this protein is Ribose import ATP-binding protein RbsA.